The primary structure comprises 265 residues: UPF0354 protein BH3252 (265 aa).

It belongs to the UPF0354 family.

The sequence is that of UPF0354 protein BH3252 from Halalkalibacterium halodurans (strain ATCC BAA-125 / DSM 18197 / FERM 7344 / JCM 9153 / C-125) (Bacillus halodurans).